The following is a 213-amino-acid chain: tRNA (guanine-N(7)-)-methyltransferase (213 aa).

Residues E44, E69, N96, and D118 each coordinate S-adenosyl-L-methionine. D118 is a catalytic residue. K122 is a binding site for substrate. The segment at 124–129 (RHEKRR) is interaction with RNA. Residues D154 and 191–194 (TEYE) each bind substrate.

The protein belongs to the class I-like SAM-binding methyltransferase superfamily. TrmB family.

The catalysed reaction is guanosine(46) in tRNA + S-adenosyl-L-methionine = N(7)-methylguanosine(46) in tRNA + S-adenosyl-L-homocysteine. It participates in tRNA modification; N(7)-methylguanine-tRNA biosynthesis. Functionally, catalyzes the formation of N(7)-methylguanine at position 46 (m7G46) in tRNA. This is tRNA (guanine-N(7)-)-methyltransferase from Oceanobacillus iheyensis (strain DSM 14371 / CIP 107618 / JCM 11309 / KCTC 3954 / HTE831).